Consider the following 309-residue polypeptide: NAD kinase 2 (309 aa).

Residue D81 is the Proton acceptor of the active site. Residues 81 to 82, 155 to 156, D185, 196 to 201, and N255 contribute to the NAD(+) site; these read DG, NE, and TAYALS.

This sequence belongs to the NAD kinase family. The cofactor is a divalent metal cation.

It is found in the cytoplasm. The enzyme catalyses NAD(+) + ATP = ADP + NADP(+) + H(+). In terms of biological role, involved in the regulation of the intracellular balance of NAD and NADP, and is a key enzyme in the biosynthesis of NADP. Catalyzes specifically the phosphorylation on 2'-hydroxyl of the adenosine moiety of NAD to yield NADP. The chain is NAD kinase 2 from Gloeobacter violaceus (strain ATCC 29082 / PCC 7421).